The following is a 564-amino-acid chain: Proline--tRNA ligase (564 aa).

Belongs to the class-II aminoacyl-tRNA synthetase family. ProS type 1 subfamily. As to quaternary structure, homodimer.

The protein localises to the cytoplasm. The catalysed reaction is tRNA(Pro) + L-proline + ATP = L-prolyl-tRNA(Pro) + AMP + diphosphate. In terms of biological role, catalyzes the attachment of proline to tRNA(Pro) in a two-step reaction: proline is first activated by ATP to form Pro-AMP and then transferred to the acceptor end of tRNA(Pro). As ProRS can inadvertently accommodate and process non-cognate amino acids such as alanine and cysteine, to avoid such errors it has two additional distinct editing activities against alanine. One activity is designated as 'pretransfer' editing and involves the tRNA(Pro)-independent hydrolysis of activated Ala-AMP. The other activity is designated 'posttransfer' editing and involves deacylation of mischarged Ala-tRNA(Pro). The misacylated Cys-tRNA(Pro) is not edited by ProRS. The protein is Proline--tRNA ligase of Xylella fastidiosa (strain M12).